We begin with the raw amino-acid sequence, 92 residues long: Small ribosomal subunit protein uS19c (92 aa).

The protein belongs to the universal ribosomal protein uS19 family.

It is found in the plastid. Its subcellular location is the chloroplast. In terms of biological role, protein S19 forms a complex with S13 that binds strongly to the 16S ribosomal RNA. This is Small ribosomal subunit protein uS19c (rps19) from Porphyra purpurea (Red seaweed).